Here is a 429-residue protein sequence, read N- to C-terminus: MKKVLAIILGGGAGTRLYPLTKLRAKPAVPVAGKYRLIDIPVSNCINSEIFKIYVLTQFNSASLNRHIARTYNFSGFSEGFVEVLAAQQTPENPNWFQGTADAVRQYLWMLQEWDVDEFLILSGDHLYRMDYRLFIQRHRETNADITLSVIPIDDRRASDFGLMKIDNSGRVIDFSEKPKGEALTKMRVDTTVLGLTPEQAASQPYIASMGIYVFKKDVLIKLLKESLERTDFGKEIIPDASKDHNVQAYLFDDYWEDIGTIEAFYNANLALTQQPMPPFSFYDEEAPIYTRARYLPPTKLLDCHVTESIIGEGCILKNCRIQHSVLGVRSRIETGCVIEESLLMGADFYQASVERQCSIDKGDIPVGIGPDTIIRRAIIDKNARIGHDVKIINKDNVQEADRESQGFYIRSGIVVVLKNAVITDGTII.

Residues G162, 177–178, and S209 contribute to the alpha-D-glucose 1-phosphate site; that span reads EK.

This sequence belongs to the bacterial/plant glucose-1-phosphate adenylyltransferase family. In terms of assembly, homotetramer.

The enzyme catalyses alpha-D-glucose 1-phosphate + ATP + H(+) = ADP-alpha-D-glucose + diphosphate. It functions in the pathway glycan biosynthesis; glycogen biosynthesis. Involved in the biosynthesis of ADP-glucose, a building block required for the elongation reactions to produce glycogen. Catalyzes the reaction between ATP and alpha-D-glucose 1-phosphate (G1P) to produce pyrophosphate and ADP-Glc. The sequence is that of Glucose-1-phosphate adenylyltransferase from Trichormus variabilis (strain ATCC 29413 / PCC 7937) (Anabaena variabilis).